The sequence spans 516 residues: Glutamyl-tRNA(Gln) amidotransferase subunit B, mitochondrial (516 aa).

The protein belongs to the GatB/GatE family. GatB subfamily. In terms of assembly, subunit of the heterotrimeric GatCAB amidotransferase (AdT) complex, composed of A, B and C subunits.

The protein localises to the mitochondrion. It carries out the reaction L-glutamyl-tRNA(Gln) + L-glutamine + ATP + H2O = L-glutaminyl-tRNA(Gln) + L-glutamate + ADP + phosphate + H(+). Functionally, allows the formation of correctly charged Gln-tRNA(Gln) through the transamidation of misacylated Glu-tRNA(Gln) in the mitochondria. The reaction takes place in the presence of glutamine and ATP through an activated gamma-phospho-Glu-tRNA(Gln). The protein is Glutamyl-tRNA(Gln) amidotransferase subunit B, mitochondrial of Drosophila melanogaster (Fruit fly).